The chain runs to 185 residues: Elongation factor P (185 aa).

This sequence belongs to the elongation factor P family.

The protein localises to the cytoplasm. It participates in protein biosynthesis; polypeptide chain elongation. Involved in peptide bond synthesis. Stimulates efficient translation and peptide-bond synthesis on native or reconstituted 70S ribosomes in vitro. Probably functions indirectly by altering the affinity of the ribosome for aminoacyl-tRNA, thus increasing their reactivity as acceptors for peptidyl transferase. The polypeptide is Elongation factor P (Desulfovibrio desulfuricans (strain ATCC 27774 / DSM 6949 / MB)).